The following is a 496-amino-acid chain: UDP-N-acetylmuramoyl-L-alanyl-D-glutamate--2,6-diaminopimelate ligase (496 aa).

Ser32 is a binding site for UDP-N-acetyl-alpha-D-muramoyl-L-alanyl-D-glutamate. 116 to 122 (GTNGKTT) contacts ATP. Residues 158 to 159 (TT), Ser185, Gln191, and Arg193 each bind UDP-N-acetyl-alpha-D-muramoyl-L-alanyl-D-glutamate. Lys225 carries the N6-carboxylysine modification. Residues Arg389, 413–416 (DNPR), Gly464, and Glu468 each bind meso-2,6-diaminopimelate. Positions 413 to 416 (DNPR) match the Meso-diaminopimelate recognition motif motif.

The protein belongs to the MurCDEF family. MurE subfamily. Mg(2+) is required as a cofactor. In terms of processing, carboxylation is probably crucial for Mg(2+) binding and, consequently, for the gamma-phosphate positioning of ATP.

It localises to the cytoplasm. The catalysed reaction is UDP-N-acetyl-alpha-D-muramoyl-L-alanyl-D-glutamate + meso-2,6-diaminopimelate + ATP = UDP-N-acetyl-alpha-D-muramoyl-L-alanyl-gamma-D-glutamyl-meso-2,6-diaminopimelate + ADP + phosphate + H(+). It functions in the pathway cell wall biogenesis; peptidoglycan biosynthesis. In terms of biological role, catalyzes the addition of meso-diaminopimelic acid to the nucleotide precursor UDP-N-acetylmuramoyl-L-alanyl-D-glutamate (UMAG) in the biosynthesis of bacterial cell-wall peptidoglycan. This Nostoc sp. (strain PCC 7120 / SAG 25.82 / UTEX 2576) protein is UDP-N-acetylmuramoyl-L-alanyl-D-glutamate--2,6-diaminopimelate ligase.